The chain runs to 212 residues: MAIGLIGRKVGMTRIFTEDGVSIPVTVIEVAGNRVTQVKTLETDGYRALQVTTGTKKANRITKAEAGHFAKGGVEAGRGLWEMRLADGEGEGIEVGAELNVDIFAETVKVDVTGQSKGKGFQGGVKRWNFRTQDMTHGNSLAHRSNGSIGQNQTPGRVFKGKKMSGHMGAEQVTTQNLHVVRVDSERNLILVRGAVPGATNGDLIIKPAVKA.

Position 153 is an N5-methylglutamine (Gln-153).

The protein belongs to the universal ribosomal protein uL3 family. As to quaternary structure, part of the 50S ribosomal subunit. Forms a cluster with proteins L14 and L19. Methylated by PrmB.

One of the primary rRNA binding proteins, it binds directly near the 3'-end of the 23S rRNA, where it nucleates assembly of the 50S subunit. This is Large ribosomal subunit protein uL3 from Shewanella denitrificans (strain OS217 / ATCC BAA-1090 / DSM 15013).